The following is a 626-amino-acid chain: UvrABC system protein C (626 aa).

A GIY-YIG domain is found at 20–97 (ECSGVYKMLD…IKKFQPKFNI (78 aa)). The UVR domain occupies 207–242 (IALQANLSKKMQELSSQMRFEEAAEIRDRIKALSYV).

It belongs to the UvrC family. As to quaternary structure, interacts with UvrB in an incision complex.

The protein localises to the cytoplasm. The UvrABC repair system catalyzes the recognition and processing of DNA lesions. UvrC both incises the 5' and 3' sides of the lesion. The N-terminal half is responsible for the 3' incision and the C-terminal half is responsible for the 5' incision. The chain is UvrABC system protein C from Rickettsia prowazekii (strain Madrid E).